Consider the following 814-residue polypeptide: Rho GTPase-activating protein 26 (814 aa).

The region spanning 7–262 is the BAR domain; sequence EFSDCCLDSP…MKENPLEHKT (256 aa). One can recognise a PH domain in the interval 265–369; the sequence is PYTMEGYLYV…WMEAMDGREP (105 aa). Positions 383–568 constitute a Rho-GAP domain; that stretch reads AQLDSIGFSI…ILIENHEKIF (186 aa). Disordered regions lie at residues 584 to 618 and 638 to 696; these read SRKK…QRNS and SSSL…SSDS. 2 stretches are compositionally biased toward low complexity: residues 591-600 and 638-661; these read SKPPSCSKRP and SSSL…SRPS. Residues 662–672 are compositionally biased toward pro residues; sequence SLPPNPSPTSP. Serine 668 is modified (phosphoserine). Threonine 670 bears the Phosphothreonine mark. Serine 671 carries the phosphoserine modification. Residues 673–696 are compositionally biased toward low complexity; the sequence is LSPSWPMFSAPSSPMPTSSTSSDS. The SH3 domain maps to 756–814; sequence TPFRKAKALYACQAEHDSELSFTAGTVFDNVHPSQEPGWLEGTLNGKTGLIPENYVEFL.

Interacts with NYAP1, NYAP2 and MYO16. Interacts with MICAL1 and WDR44. Binds to the C-terminus of PTK2/FAK1. Post-translationally, phosphorylated in a PINK1-dependent fashion promoting retrograde mitochondrial trafficking and clustering.

Its subcellular location is the cell junction. It is found in the focal adhesion. The protein resides in the cytoplasm. The protein localises to the cytoskeleton. It localises to the endosome membrane. Its function is as follows. GTPase-activating protein for RHOA and CDC42. Facilitates mitochondrial quality control by promoting Parkin-mediated recruitment of autophagosomes to damaged mitochondria. Associates with MICAL1 on the endosomal membrane to promote Rab8-Rab10-dependent tubule extension. After dissociation of MICAL1, recruits WDR44 which connects the endoplasmic reticulum (ER) with the endosomal tubule, thereby participating in the export of a subset of neosynthesized proteins. In Mus musculus (Mouse), this protein is Rho GTPase-activating protein 26 (Arhgap26).